The following is a 382-amino-acid chain: Putative NADPH dehydrogenase C5H10.04 (382 aa).

FMN-binding residues include T28 and H189. Substrate-binding residues include H189 and N192. FMN is bound by residues R242 and R334. Y361 serves as a coordination point for substrate.

It belongs to the NADH:flavin oxidoreductase/NADH oxidase family. In terms of assembly, homodimer or heterodimer. The cofactor is FMN.

The enzyme catalyses A + NADPH + H(+) = AH2 + NADP(+). The protein is Putative NADPH dehydrogenase C5H10.04 of Schizosaccharomyces pombe (strain 972 / ATCC 24843) (Fission yeast).